We begin with the raw amino-acid sequence, 623 residues long: Glutathione import ATP-binding protein GsiA (623 aa).

ABC transporter domains follow at residues 15-269 and 314-564; these read VENL…RALL and LRVR…RKLL. ATP-binding positions include 49 to 56 and 357 to 364; these read GESGSGKS.

This sequence belongs to the ABC transporter superfamily. Glutathione importer (TC 3.A.1.5.11) family. In terms of assembly, the complex is composed of two ATP-binding proteins (GsiA), two transmembrane proteins (GsiC and GsiD) and a solute-binding protein (GsiB).

The protein localises to the cell inner membrane. It carries out the reaction glutathione(out) + ATP + H2O = glutathione(in) + ADP + phosphate + H(+). Functionally, part of the ABC transporter complex GsiABCD involved in glutathione import. Responsible for energy coupling to the transport system. The chain is Glutathione import ATP-binding protein GsiA from Shigella dysenteriae serotype 1 (strain Sd197).